A 327-amino-acid chain; its full sequence is Metaxin-1 homolog (327 aa).

A helical membrane pass occupies residues 281–301 (IVAGVGAVLAMGAFAAWRGIY).

It belongs to the metaxin family. Associates with the mitochondrial contact site and cristae organizing system (MICOS) complex (also known as MINOS or MitOS complex).

Its subcellular location is the mitochondrion outer membrane. Functionally, involved in transport of proteins into the mitochondrion. Essential for embryonic development. The polypeptide is Metaxin-1 homolog (Drosophila melanogaster (Fruit fly)).